The primary structure comprises 728 residues: MDSDMDYERPNVETIKCVVVGDNAVGKTRLICARACNATLTQYQLLATHVPTVWAIDQYRVCQEVLERSRDVVDDVSVSLRLWDTFGDHHKDRRFAYGRSDVVVLCFSIANPNSLHHVKTMWYPEIKHFCPRAPVILVGCQLDLRYADLEAVNRARRPLARPIKPNEILPPEKGREVAKELGIPYYETSVVAQFGIKDVFDNAIRAALISRRHLQFWKSHLRNVQRPLLQAPFLPPKPPPPIIVVPDPPSSSEECPAHLLEDPLCADVILVLQERVRIFAHKIYLSTSSSKFYDLFLMDLSEGELGGPSGSGGPRPEDHRSHPEQHHHHHHHHHGRDFLLRAASFDVCESVDEAGGSGPAGLRASTSDGILRGNGTGYLPGRGRVLSSWSRAFVSIQEEMAEDPLTFKSRLMVVVKMDNSIQPGPFRAVLKYLYTGELGENERDLMHIAHIAELLEVFDLRMMVANILNNEAFMNQEITKAFHVRRTNRVKECLAKGTFSDVTFILDDGTISAHKPLLISSCDWMAAMFGGPFVESSTREVVFPYTSKSCMRAVLEYLYTGMFTSSPDLDDMKLIVLANRLCLPHLVALTEQYTVTGLMEATQMMVDIDGDVLVFLELAQFHCAYQLADWCLHHICTNYNNVCRKFPRDMKAMSPENQEYFEKHRWPPVWYLKEEDHYQRARKEREKEDYLHLRRQPKRRWLFWNSPSSPSSSAAGSASPSSSSSAVV.

The segment at 1–210 (MDSDMDYERP…DNAIRAALIS (210 aa)) is rho-like. Residues 21–28 (GDNAVGKT), 84–88 (DTFGD), and 140–143 (CQLD) each bind GTP. BTB domains lie at 266–333 (ADVI…HHHH) and 500–567 (SDVT…TSSP). Positions 304–313 (ELGGPSGSGG) are enriched in gly residues. The tract at residues 304-333 (ELGGPSGSGGPRPEDHRSHPEQHHHHHHHH) is disordered. Positions 315-324 (RPEDHRSHPE) are enriched in basic and acidic residues. A disordered region spans residues 703 to 728 (FWNSPSSPSSSAAGSASPSSSSSAVV). Residues 706 to 728 (SPSSPSSSAAGSASPSSSSSAVV) are compositionally biased toward low complexity.

The protein belongs to the small GTPase superfamily. Rho family. As to quaternary structure, interacts with HSP90AA1 and HSP90AB1. Forms a complex with CUL3 and RBX1. Interacts (via BTB 1 domain) with CUL3. Interacts with MSI2. Post-translationally, autoubiquitinated by RHOBTB2-CUL3-RBX1 ubiquitin ligase complex. In terms of tissue distribution, expressed in most tissues, with highest expression in brain.

Functionally, regulator of cell proliferation and apoptosis. It likely functions as a substrate-adapter that recruits key substrates, e.g. MSI2, to CUL3-based ubiquitin ligase complexes for degradation. Required for MSI2 ubiquitination and degradation. The polypeptide is Rho-related BTB domain-containing protein 2 (Rhobtb2) (Mus musculus (Mouse)).